Here is a 416-residue protein sequence, read N- to C-terminus: Multifunctional CCA protein (416 aa).

The ATP site is built by glycine 8 and arginine 11. CTP-binding residues include glycine 8 and arginine 11. 2 residues coordinate Mg(2+): aspartate 21 and aspartate 23. ATP-binding residues include arginine 91, arginine 137, and arginine 140. CTP is bound by residues arginine 91, arginine 137, and arginine 140. The 102-residue stretch at 228–329 (TGVHTLMVLA…VKIFDKADFW (102 aa)) folds into the HD domain.

The protein belongs to the tRNA nucleotidyltransferase/poly(A) polymerase family. Bacterial CCA-adding enzyme type 1 subfamily. In terms of assembly, monomer. Can also form homodimers and oligomers. Mg(2+) serves as cofactor. Requires Ni(2+) as cofactor.

It carries out the reaction a tRNA precursor + 2 CTP + ATP = a tRNA with a 3' CCA end + 3 diphosphate. It catalyses the reaction a tRNA with a 3' CCA end + 2 CTP + ATP = a tRNA with a 3' CCACCA end + 3 diphosphate. Its function is as follows. Catalyzes the addition and repair of the essential 3'-terminal CCA sequence in tRNAs without using a nucleic acid template. Adds these three nucleotides in the order of C, C, and A to the tRNA nucleotide-73, using CTP and ATP as substrates and producing inorganic pyrophosphate. tRNA 3'-terminal CCA addition is required both for tRNA processing and repair. Also involved in tRNA surveillance by mediating tandem CCA addition to generate a CCACCA at the 3' terminus of unstable tRNAs. While stable tRNAs receive only 3'-terminal CCA, unstable tRNAs are marked with CCACCA and rapidly degraded. The polypeptide is Multifunctional CCA protein (Shewanella baltica (strain OS223)).